Reading from the N-terminus, the 350-residue chain is CMP-N-acetylneuraminate-beta-galactosamide-alpha-2,3-sialyltransferase 2 (350 aa).

The Cytoplasmic portion of the chain corresponds to 1 to 6 (MKCSLR). A helical; Signal-anchor for type II membrane protein membrane pass occupies residues 7–27 (VWFLSMAFLLVFIMSLLFTYS). At 28-350 (HHSMATLPYL…ASKIEVYRGN (323 aa)) the chain is on the lumenal side. Intrachain disulfides connect Cys-70/Cys-75, Cys-72/Cys-149, and Cys-152/Cys-291. Residues Gln-116, Asn-157, and Asn-180 each contribute to the substrate site. The N-linked (GlcNAc...) asparagine glycan is linked to Asn-211. 6 residues coordinate substrate: Tyr-240, Tyr-276, Gly-280, Gly-300, His-309, and His-326.

The protein belongs to the glycosyltransferase 29 family. In terms of assembly, homodimer; disulfide-linked. Homodimer formation occurs in the endoplasmic reticulum. In terms of processing, the soluble form derives from the membrane form by proteolytic processing. Post-translationally, N-glycosylated; necessary for proper exit from endoplasmic reticulum and trafficking to the Golgi apparatus.

The protein localises to the golgi apparatus. It is found in the golgi stack membrane. The protein resides in the secreted. The catalysed reaction is a beta-D-galactosyl-(1-&gt;3)-N-acetyl-alpha-D-galactosaminyl derivative + CMP-N-acetyl-beta-neuraminate = an N-acetyl-alpha-neuraminyl-(2-&gt;3)-beta-D-galactosyl-(1-&gt;3)-N-acetyl-alpha-D-galactosaminyl derivative + CMP + H(+). The enzyme catalyses a ganglioside GM1 (d18:1(4E)) + CMP-N-acetyl-beta-neuraminate = a ganglioside GD1a (d18:1(4E)) + CMP + H(+). It carries out the reaction ganglioside GM1 (d18:1(4E)/18:0) + CMP-N-acetyl-beta-neuraminate = ganglioside GD1a (18:1(4E)/18:0) + CMP + H(+). It catalyses the reaction a ganglioside GA1 + CMP-N-acetyl-beta-neuraminate = a ganglioside GM1b + CMP + H(+). The catalysed reaction is a ganglioside GA1 (d18:1(4E)) + CMP-N-acetyl-beta-neuraminate = a ganglioside GM1b (d18:1(4E)) + CMP + H(+). The enzyme catalyses a globoside GalGb4Cer + CMP-N-acetyl-beta-neuraminate = a globoside MSGG + CMP + H(+). The protein operates within protein modification; protein glycosylation. It participates in glycolipid biosynthesis. In terms of biological role, a beta-galactoside alpha2-3 sialyltransferase primarily involved in terminal sialylation of ganglio and globo series glycolipids. Catalyzes the transfer of sialic acid (N-acetyl-neuraminic acid; Neu5Ac) from the nucleotide sugar donor CMP-Neu5Ac onto acceptor Galbeta-(1-&gt;3)-GalNAc-terminated glycoconjugates through an alpha2-3 linkage. Sialylates GM1/GM1a, GA1/asialo-GM1 gangliosides to form GD1a and GM1b, respectively. Together with ST3GAL3, primarily responsible for biosynthesis of brain gangliosides that function as ligand for myelin-associated glycoprotein MAG on axons, regulating MAG expression and axonal myelin stability and regeneration. Responsible for the sialylation of the pluripotent stem cell- and cancer stem cell-associated antigen SSEA3, forming SSEA4. Sialylates with low efficiency asialofetuin, presumably onto O-glycosidically linked Galbeta-(1-&gt;3)-GalNAc-O-Ser. The protein is CMP-N-acetylneuraminate-beta-galactosamide-alpha-2,3-sialyltransferase 2 (St3gal2) of Rattus norvegicus (Rat).